The primary structure comprises 1392 residues: L-2-aminoadipate reductase (1392 aa).

Lys541 is covalently cross-linked (Glycyl lysine isopeptide (Lys-Gly) (interchain with G-Cter in ubiquitin)). Positions 843–920 (SQFTNVEREV…AFAAEIDRIK (78 aa)) constitute a Carrier domain. Ser880 is subject to O-(pantetheine 4'-phosphoryl)serine. Residue Lys1276 forms a Glycyl lysine isopeptide (Lys-Gly) (interchain with G-Cter in ubiquitin) linkage.

This sequence belongs to the ATP-dependent AMP-binding enzyme family. The cofactor is pantetheine 4'-phosphate.

The catalysed reaction is (S)-2-amino-6-oxohexanoate + NADP(+) + H2O = L-2-aminoadipate + NADPH + 2 H(+). It carries out the reaction (S)-2-amino-6-oxohexanoate + NAD(+) + H2O = L-2-aminoadipate + NADH + 2 H(+). The enzyme catalyses (S)-2-amino-6-oxohexanoate + AMP + diphosphate + NADP(+) = L-2-aminoadipate + ATP + NADPH + H(+). The protein operates within amino-acid biosynthesis; L-lysine biosynthesis via AAA pathway; L-lysine from L-alpha-aminoadipate (fungal route): step 1/3. Functionally, catalyzes the activation of alpha-aminoadipate by ATP-dependent adenylation and the reduction of activated alpha-aminoadipate by NADPH. The activated alpha-aminoadipate is bound to the phosphopantheinyl group of the enzyme itself before it is reduced to (S)-2-amino-6-oxohexanoate. The chain is L-2-aminoadipate reductase (LYS2) from Saccharomyces cerevisiae (strain ATCC 204508 / S288c) (Baker's yeast).